The following is a 342-amino-acid chain: Methylthioribose-1-phosphate isomerase (342 aa).

Substrate-binding positions include 49-51 (RGA), R86, and Q187. D228 acts as the Proton donor in catalysis. Residue 238 to 239 (NK) participates in substrate binding.

This sequence belongs to the eIF-2B alpha/beta/delta subunits family. MtnA subfamily.

The enzyme catalyses 5-(methylsulfanyl)-alpha-D-ribose 1-phosphate = 5-(methylsulfanyl)-D-ribulose 1-phosphate. Its pathway is amino-acid biosynthesis; L-methionine biosynthesis via salvage pathway; L-methionine from S-methyl-5-thio-alpha-D-ribose 1-phosphate: step 1/6. Its function is as follows. Catalyzes the interconversion of methylthioribose-1-phosphate (MTR-1-P) into methylthioribulose-1-phosphate (MTRu-1-P). The protein is Methylthioribose-1-phosphate isomerase of Serratia proteamaculans (strain 568).